A 242-amino-acid polypeptide reads, in one-letter code: ATP-dependent dethiobiotin synthetase BioD (242 aa).

Position 12 to 17 (12 to 17 (EVGKTV)) interacts with ATP. Thr-16 is a Mg(2+) binding site. Lys-37 is an active-site residue. Ser-41 serves as a coordination point for substrate. Residues Asp-51 and 112–115 (EGAG) each bind ATP. Residues Asp-51 and Glu-112 each contribute to the Mg(2+) site.

It belongs to the dethiobiotin synthetase family. As to quaternary structure, homodimer. Mg(2+) is required as a cofactor.

It is found in the cytoplasm. It carries out the reaction (7R,8S)-7,8-diammoniononanoate + CO2 + ATP = (4R,5S)-dethiobiotin + ADP + phosphate + 3 H(+). It participates in cofactor biosynthesis; biotin biosynthesis; biotin from 7,8-diaminononanoate: step 1/2. Its function is as follows. Catalyzes a mechanistically unusual reaction, the ATP-dependent insertion of CO2 between the N7 and N8 nitrogen atoms of 7,8-diaminopelargonic acid (DAPA, also called 7,8-diammoniononanoate) to form a ureido ring. The polypeptide is ATP-dependent dethiobiotin synthetase BioD (Bacillus cereus (strain ATCC 14579 / DSM 31 / CCUG 7414 / JCM 2152 / NBRC 15305 / NCIMB 9373 / NCTC 2599 / NRRL B-3711)).